Reading from the N-terminus, the 131-residue chain is Single-stranded DNA-binding protein 1 (131 aa).

The SSB domain maps to 1–103 (MYNKVIAIGR…VLCQSFQLLE (103 aa)).

In terms of assembly, homotetramer.

This Streptococcus pyogenes serotype M6 (strain ATCC BAA-946 / MGAS10394) protein is Single-stranded DNA-binding protein 1 (ssb1).